The sequence spans 229 residues: B-cell antigen receptor complex-associated protein beta chain (229 aa).

The signal sequence occupies residues 1 to 28 (MARLALSPVPSHWMVALLLLLSAEPVPA). At 29–159 (ARSEDRYRNP…QLKQRNTLKD (131 aa)) the chain is on the extracellular side. The Ig-like V-type domain occupies 38 to 138 (PKGSACSRIW…TSEVYQGCGT (101 aa)). Intrachain disulfides connect C43/C126 and C65/C122. Residues N73, N101, N127, and N128 are each glycosylated (N-linked (GlcNAc...) asparagine). Residues 160-180 (GIIMIQTLLIILFIIVPIFLL) traverse the membrane as a helical segment. The Cytoplasmic portion of the chain corresponds to 181-229 (LDKDDSKAGMEEDHTYEGLDIDQTATYEDIVTLRTGEVKWSVGEHPGQE). One can recognise an ITAM domain in the interval 185-213 (DSKAGMEEDHTYEGLDIDQTATYEDIVTL). Phosphotyrosine; by SRC-type Tyr-kinases is present on residues Y196 and Y207.

Heterodimer of alpha and beta chains; disulfide-linked. Part of the B-cell antigen receptor complex where the alpha/beta chain heterodimer is non-covalently associated with an antigen-specific membrane-bound surface immunoglobulin of two heavy chains and two light chains. Interacts with LYN. Post-translationally, phosphorylated on tyrosine upon B-cell activation by SRC-type Tyr-kinases such as BLK, LYN and SYK. In terms of tissue distribution, B-cells.

The protein localises to the cell membrane. Its function is as follows. Required in cooperation with CD79A for initiation of the signal transduction cascade activated by the B-cell antigen receptor complex (BCR) which leads to internalization of the complex, trafficking to late endosomes and antigen presentation. Enhances phosphorylation of CD79A, possibly by recruiting kinases which phosphorylate CD79A or by recruiting proteins which bind to CD79A and protect it from dephosphorylation. This is B-cell antigen receptor complex-associated protein beta chain (CD79B) from Homo sapiens (Human).